Reading from the N-terminus, the 62-residue chain is Sperm protamine P1 (62 aa).

Residues 1–62 (MARCRRHSRS…RYSRRGRRRY (62 aa)) are disordered.

Belongs to the protamine P1 family. Testis.

It localises to the nucleus. The protein resides in the chromosome. Protamines substitute for histones in the chromatin of sperm during the haploid phase of spermatogenesis. They compact sperm DNA into a highly condensed, stable and inactive complex. The protein is Sperm protamine P1 (PRM1) of Planigale maculata sinualis (Common planigale).